The sequence spans 361 residues: Phospho-N-acetylmuramoyl-pentapeptide-transferase (361 aa).

The next 10 membrane-spanning stretches (helical) occupy residues 18–38 (VFNYLTFRSIVSALTALILVL), 73–93 (TMGGVLIIVAIVISVLLWGDL), 97–117 (FIWVILLVTVAFSAIGWMDDY), 135–155 (LLQSIIGALAAVYLYFSATTG), 168–188 (VLPNLGLFYIVLAYFVIVGSS), 196–216 (GLDGLALMPTVMIGAALGVFA), 235–255 (GAGEVVVFCSALVGAGLGFLW), 263–283 (VFMGDVGSLGLGAALGVTAVV), 288–308 (LVYFLMGGIFVAETLSVILQV), and 338–358 (KVIVRFWIITFILVLCGLATL).

This sequence belongs to the glycosyltransferase 4 family. MraY subfamily. Mg(2+) is required as a cofactor.

The protein localises to the cell inner membrane. It carries out the reaction UDP-N-acetyl-alpha-D-muramoyl-L-alanyl-gamma-D-glutamyl-meso-2,6-diaminopimeloyl-D-alanyl-D-alanine + di-trans,octa-cis-undecaprenyl phosphate = di-trans,octa-cis-undecaprenyl diphospho-N-acetyl-alpha-D-muramoyl-L-alanyl-D-glutamyl-meso-2,6-diaminopimeloyl-D-alanyl-D-alanine + UMP. It functions in the pathway cell wall biogenesis; peptidoglycan biosynthesis. Its function is as follows. Catalyzes the initial step of the lipid cycle reactions in the biosynthesis of the cell wall peptidoglycan: transfers peptidoglycan precursor phospho-MurNAc-pentapeptide from UDP-MurNAc-pentapeptide onto the lipid carrier undecaprenyl phosphate, yielding undecaprenyl-pyrophosphoryl-MurNAc-pentapeptide, known as lipid I. The polypeptide is Phospho-N-acetylmuramoyl-pentapeptide-transferase (Coxiella burnetii (strain CbuK_Q154) (Coxiella burnetii (strain Q154))).